A 1786-amino-acid chain; its full sequence is Protein TIC 214 (1786 aa).

A run of 6 helical transmembrane segments spans residues 19-39 (IINS…FSIG), 68-88 (FIAG…HLAL), 91-111 (PHTI…WNNH), 133-153 (VFLN…SSML), 176-196 (VGWL…LVWI), and 227-247 (IFSI…PSPI). The stretch at 1007-1046 (SLSEKKIKNLIDRKKTIRNQIEEISKEKQNLTNSCTKLRY) forms a coiled coil.

Belongs to the TIC214 family. Part of the Tic complex. Component of the 1-MD complex, composed of TIC20-I, TIC214, TIC100 and TIC56. Interacts with the translocating preproteins. Hydrolysis of ATP is essential for the formation of this complex. The 1-MD complex interacts with TIC21.

The protein resides in the plastid. Its subcellular location is the chloroplast inner membrane. Functionally, involved in protein precursor import into chloroplasts. May be part of an intermediate translocation complex acting as a protein-conducting channel at the inner envelope. This Arabidopsis thaliana (Mouse-ear cress) protein is Protein TIC 214.